Reading from the N-terminus, the 380-residue chain is DNA replication and repair protein RecF (380 aa).

ATP is bound at residue 30–37; the sequence is GPNGFGKT.

It belongs to the RecF family.

It localises to the cytoplasm. Functionally, the RecF protein is involved in DNA metabolism; it is required for DNA replication and normal SOS inducibility. RecF binds preferentially to single-stranded, linear DNA. It also seems to bind ATP. The chain is DNA replication and repair protein RecF from Mycobacterium sp. (strain KMS).